Reading from the N-terminus, the 374-residue chain is Spore germination protein B3 (374 aa).

The signal sequence occupies residues 1–19 (MKTASKFSVMFFMLLALCG). C20 carries the N-palmitoyl cysteine lipid modification. C20 carries the S-diacylglycerol cysteine lipid modification.

Belongs to the GerABKC lipoprotein family.

The protein localises to the cell membrane. In terms of biological role, involved in the response to the germinative mixture of L-asparagine, glucose, fructose and potassium ions (AGFK). Cannot stimulate germination in the absence of gerD and gerK gene products (fructose and glucose receptors respectively). This Bacillus subtilis (strain 168) protein is Spore germination protein B3 (gerBC).